Reading from the N-terminus, the 290-residue chain is Porphobilinogen deaminase (290 aa).

C237 bears the S-(dipyrrolylmethanemethyl)cysteine mark.

It belongs to the HMBS family. Monomer. Dipyrromethane is required as a cofactor.

The catalysed reaction is 4 porphobilinogen + H2O = hydroxymethylbilane + 4 NH4(+). The protein operates within porphyrin-containing compound metabolism; protoporphyrin-IX biosynthesis; coproporphyrinogen-III from 5-aminolevulinate: step 2/4. Tetrapolymerization of the monopyrrole PBG into the hydroxymethylbilane pre-uroporphyrinogen in several discrete steps. The sequence is that of Porphobilinogen deaminase from Clostridium botulinum (strain ATCC 19397 / Type A).